The sequence spans 100 residues: Co-chaperonin GroES (100 aa).

Belongs to the GroES chaperonin family. Heptamer of 7 subunits arranged in a ring. Interacts with the chaperonin GroEL.

The protein localises to the cytoplasm. Together with the chaperonin GroEL, plays an essential role in assisting protein folding. The GroEL-GroES system forms a nano-cage that allows encapsulation of the non-native substrate proteins and provides a physical environment optimized to promote and accelerate protein folding. GroES binds to the apical surface of the GroEL ring, thereby capping the opening of the GroEL channel. This is Co-chaperonin GroES from Mycobacterium tuberculosis (strain CDC 1551 / Oshkosh).